Consider the following 670-residue polypeptide: DNA topoisomerase 6 subunit B (670 aa).

The tract at residues 1–30 (MAGDDLVETKKGSSKNSKDSNESKLKQKSP) is disordered. Positions 7-25 (VETKKGSSKNSKDSNESKL) are enriched in basic and acidic residues. Residues Asn-60, Asp-160, 181 to 182 (TK), 190 to 197 (GKFGLGAK), and Lys-516 contribute to the ATP site.

It belongs to the TOP6B family. Homodimer. Heterotetramer of two TOP6A and two TOP6B subunits. Interacts with SPO11-2, but not with SPO11-1, RHL1 or BIN4. As to expression, highly expressed in leaves, stems, flowers and seedlings.

The protein localises to the nucleus. It catalyses the reaction ATP-dependent breakage, passage and rejoining of double-stranded DNA.. Functionally, component of the DNA topoisomerase VI involved in chromatin organization and progression of endoreduplication cycles. Relaxes both positive and negative superturns and exhibits a strong decatenase activity. The B subunit binds ATP. Involved in cell-elongation processes. The sequence is that of DNA topoisomerase 6 subunit B from Arabidopsis thaliana (Mouse-ear cress).